A 146-amino-acid polypeptide reads, in one-letter code: Prefoldin subunit alpha 1 (146 aa).

This sequence belongs to the prefoldin subunit alpha family. As to quaternary structure, heterohexamer of two alpha and four beta subunits.

It is found in the cytoplasm. Molecular chaperone capable of stabilizing a range of proteins. Seems to fulfill an ATP-independent, HSP70-like function in archaeal de novo protein folding. This Thermococcus kodakarensis (strain ATCC BAA-918 / JCM 12380 / KOD1) (Pyrococcus kodakaraensis (strain KOD1)) protein is Prefoldin subunit alpha 1.